Consider the following 317-residue polypeptide: Protein phosphatase 1 regulatory subunit 3C-B (317 aa).

The 109-residue stretch at 150–258 (RNRLKKNLVC…NNDGKNYKLV (109 aa)) folds into the CBM21 domain.

As to quaternary structure, interacts with PPP1CC catalytic subunit of PP1 and associates with glycogen. Forms complexes with glycogen phosphorylase, glycogen synthase and phosphorylase kinase which is necessary for its regulation of PP1 activity.

Its function is as follows. Acts as a glycogen-targeting subunit for PP1 and regulates its activity. Activates glycogen synthase, reduces glycogen phosphorylase activity and limits glycogen breakdown. In Danio rerio (Zebrafish), this protein is Protein phosphatase 1 regulatory subunit 3C-B (ppp1r3cb).